The following is a 283-amino-acid chain: N-terminal Xaa-Pro-Lys N-methyltransferase 2 (283 aa).

Residues G124, R129, D146, 174–175, and Q190 contribute to the S-adenosyl-L-methionine site; that span reads LQ.

The protein belongs to the methyltransferase superfamily. NTM1 family.

It is found in the nucleus. It catalyses the reaction N-terminal L-alanyl-L-prolyl-L-lysyl-[protein] + S-adenosyl-L-methionine = N-terminal N-methyl-L-alanyl-L-prolyl-L-lysyl-[protein] + S-adenosyl-L-homocysteine + H(+). The catalysed reaction is N-terminal L-prolyl-L-prolyl-L-lysyl-[protein] + S-adenosyl-L-methionine = N-terminal N-methyl-L-prolyl-L-prolyl-L-lysyl-[protein] + S-adenosyl-L-homocysteine + H(+). It carries out the reaction N-terminal L-seryl-L-prolyl-L-lysyl-[protein] + S-adenosyl-L-methionine = N-terminal N-methyl-L-seryl-L-prolyl-L-lysyl-[protein] + S-adenosyl-L-homocysteine + H(+). Alpha N-methyltransferase that methylates the N-terminus of target proteins containing the N-terminal motif [Ala/Pro/Ser]-Pro-Lys when the initiator Met is cleaved. Specifically catalyzes monomethylation of exposed alpha-amino group of Ala or Ser residue in the [Ala/Ser]-Pro-Lys motif and Pro in the Pro-Pro-Lys motif. Predominantly functions as a mono-methyltransferase but is also able to di-/tri-methylate the GPKRIA peptide and di-methylate the PPKRIA peptide (in vitro). May activate NTMT1 by priming its substrates for trimethylation. This chain is N-terminal Xaa-Pro-Lys N-methyltransferase 2 (Ntmt2), found in Mus musculus (Mouse).